A 232-amino-acid chain; its full sequence is Small heat shock protein, chloroplastic (232 aa).

Polar residues predominate over residues 1 to 25 (MAQSVSLSTIASPILSQKPGSSVKS). Disordered regions lie at residues 1-35 (MAQSVSLSTIASPILSQKPGSSVKSTPPCMASFPL) and 48-81 (RAQAGGDGDNKDNSVEVHRVNKDDQGTAVERKPR). A chloroplast-targeting transit peptide spans 1–46 (MAQSVSLSTIASPILSQKPGSSVKSTPPCMASFPLRRQLPRLGLRN). The span at 55-78 (GDNKDNSVEVHRVNKDDQGTAVER) shows a compositional bias: basic and acidic residues. The sHSP domain occupies 124 to 232 (IGGGEIRVPW…ERTVIDVQIQ (109 aa)).

The protein belongs to the small heat shock protein (HSP20) family.

It is found in the plastid. Its subcellular location is the chloroplast. The sequence is that of Small heat shock protein, chloroplastic (HSP21) from Pisum sativum (Garden pea).